The chain runs to 799 residues: Protein ADP-ribosyltransferase PARP3 (799 aa).

Over residues 1–49 (MKVESRSHNVHHAHGEEEKVMTRKQKAESKAHEVEHSPKKAKVEDEKNG) the composition is skewed to basic and acidic residues. Residues 1–55 (MKVESRSHNVHHAHGEEEKVMTRKQKAESKAHEVEHSPKKAKVEDEKNGHTNGKS) form a disordered region. A PADR1 zinc-binding domain is found at 39 to 188 (KKAKVEDEKN…QRDLGLAIKP (150 aa)). The SAP domain occupies 71–105 (NEQLSLEQMKEILEANDLDSSGSDLEITRRCQDLL). The interval 108-152 (GALEKCMVCNGNMEFDGRRYGCRGFYSEWSSCTFSTREPPRKDEP) is zinc ribbon. Residues C113, C116, C129, and C139 each contribute to the Zn(2+) site. The disordered stretch occupies residues 140–161 (TFSTREPPRKDEPIKLPDSVQN). Over residues 145–154 (EPPRKDEPIK) the composition is skewed to basic and acidic residues. The BRCT domain maps to 189–261 (FTGMMISLMG…EPQPLESYDL (73 aa)). Residues 309 to 409 (DGKIFEKDGI…KKFQKKPLKF (101 aa)) enclose the WGR domain. A PARP alpha-helical domain is found at 436–555 (HCKLEPMVAN…DITLASHLIG (120 aa)). The PARP catalytic domain occupies 564 to 795 (DPLSDTYKKL…VKYEEKDAVI (232 aa)).

It belongs to the ARTD/PARP family.

It is found in the nucleus. It carries out the reaction L-aspartyl-[protein] + NAD(+) = 4-O-(ADP-D-ribosyl)-L-aspartyl-[protein] + nicotinamide. It catalyses the reaction L-glutamyl-[protein] + NAD(+) = 5-O-(ADP-D-ribosyl)-L-glutamyl-[protein] + nicotinamide. Involved in the base excision repair (BER) pathway, by catalyzing the poly(ADP-ribosyl)ation of a limited number of acceptor proteins involved in chromatin architecture and in DNA metabolism. This modification follows DNA damages and appears as an obligatory step in a detection/signaling pathway leading to the reparation of DNA strand breaks. This chain is Protein ADP-ribosyltransferase PARP3 (PARP3), found in Medicago truncatula (Barrel medic).